The chain runs to 1083 residues: Integrator complex subunit 3 homolog (1083 aa).

3 disordered regions span residues 551–579 (NEAV…DLPL), 929–953 (YPSS…TPSA), and 1014–1083 (AVGR…NDSD). Over residues 942-953 (KGSSAASSTPSA) the composition is skewed to low complexity. A phosphoserine mark is found at serine 1053, serine 1054, serine 1058, and serine 1059. Positions 1066–1077 (HKVTQPAKKRKK) are enriched in basic residues.

The protein belongs to the Integrator subunit 3 family. As to quaternary structure, belongs to the multiprotein complex Integrator, at least composed of IntS1, IntS2, IntS3, IntS4, omd/IntS5, IntS6, defl/IntS7, IntS8, IntS9, IntS10, IntS11, IntS12, asun/IntS13, IntS14 and IntS15. The core complex associates with protein phosphatase 2A subunits mts/PP2A and Pp2A-29B, to form the Integrator-PP2A (INTAC) complex.

It is found in the nucleus. The protein resides in the cytoplasm. Its function is as follows. Component of the integrator complex, a multiprotein complex that terminates RNA polymerase II (Pol II) transcription in the promoter-proximal region of genes. The integrator complex provides a quality checkpoint during transcription elongation by driving premature transcription termination of transcripts that are unfavorably configured for transcriptional elongation: the complex terminates transcription by (1) catalyzing dephosphorylation of the C-terminal domain (CTD) of Pol II subunit Polr2A/Rbp1 and Spt5, and (2) degrading the exiting nascent RNA transcript via endonuclease activity. The integrator complex is also involved in the 3'-end processing of the U7 snRNA, and also the spliceosomal snRNAs U1, U2, U4 and U5. The protein is Integrator complex subunit 3 homolog (IntS3) of Drosophila grimshawi (Hawaiian fruit fly).